We begin with the raw amino-acid sequence, 133 residues long: Phosphoribosyl-AMP cyclohydrolase (133 aa).

Asp-77 contributes to the Mg(2+) binding site. Cys-78 is a binding site for Zn(2+). Residues Asp-79 and Asp-81 each coordinate Mg(2+). The Zn(2+) site is built by Cys-95 and Cys-102.

Belongs to the PRA-CH family. As to quaternary structure, homodimer. It depends on Mg(2+) as a cofactor. The cofactor is Zn(2+).

The protein localises to the cytoplasm. It catalyses the reaction 1-(5-phospho-beta-D-ribosyl)-5'-AMP + H2O = 1-(5-phospho-beta-D-ribosyl)-5-[(5-phospho-beta-D-ribosylamino)methylideneamino]imidazole-4-carboxamide. It participates in amino-acid biosynthesis; L-histidine biosynthesis; L-histidine from 5-phospho-alpha-D-ribose 1-diphosphate: step 3/9. Catalyzes the hydrolysis of the adenine ring of phosphoribosyl-AMP. This chain is Phosphoribosyl-AMP cyclohydrolase, found in Azotobacter chroococcum mcd 1.